The following is an 858-amino-acid chain: Coiled-coil and C2 domain-containing protein 1B (858 aa).

5 disordered regions span residues 112 to 164 (VLGV…GASQ), 180 to 199 (AAAS…CERG), 204 to 284 (ESQL…ALLS), 329 to 352 (VDLS…APTA), and 470 to 533 (EKLA…SPSV). Residues 114–143 (GVDEETEPLDGDEVADPGGSEEENGLEDTE) are compositionally biased toward acidic residues. The segment covering 153–164 (ASAPAAQAGASQ) has biased composition (low complexity). The stretch at 166–212 (LHALLEERIHNYREAAASAKEAGEAAKARRCERGLKTLESQLASVRR) forms a coiled coil. Residues 186–199 (EAGEAAKARRCERG) are compositionally biased toward basic and acidic residues. S209 bears the Phosphoserine mark. Low complexity predominate over residues 520 to 532 (PRASSSKESPSPS). The residue at position 593 (S593) is a Phosphoserine. At T596 the chain carries Phosphothreonine. Positions 611-635 (RLSQKAEEVYAQLQKMLLEQQEKCL) form a coiled coil. Residues 676–815 (DPPTHHFELK…ENECEIREIV (140 aa)) form the C2 domain.

The protein belongs to the CC2D1 family. In terms of assembly, interacts with CHMP4B. Widely distributed in brain and peripheral tissues.

The protein localises to the nucleus. Transcription factor that binds specifically to the DRE (dual repressor element) and represses HTR1A gene transcription in neuronal cells. The protein is Coiled-coil and C2 domain-containing protein 1B (CC2D1B) of Homo sapiens (Human).